Consider the following 974-residue polypeptide: Ovochymase-2 (974 aa).

The first 21 residues, 1–21, serve as a signal peptide directing secretion; that stretch reads MAETSIFPIMMLTVMIGVGRG. Residues 22–49 constitute a propeptide, activation peptide; that stretch reads VTDSPGRVSRCGERPAANTSVSYGLLSR. Asparagine 39 is a glycosylation site (N-linked (GlcNAc...) asparagine). Residues 50–299 form the Peptidase S1 1 domain; it reads IVGGTSAVKG…LLNWLSENLN (250 aa). Cysteine 75 and cysteine 91 are oxidised to a cystine. Residue histidine 90 is the Charge relay system of the active site. Ca(2+)-binding residues include valine 112 and glutamate 117. The Charge relay system role is filled by aspartate 140. 11 cysteine pairs are disulfide-bonded: cysteine 174-cysteine 244, cysteine 205-cysteine 223, cysteine 234-cysteine 263, cysteine 312-cysteine 342, cysteine 369-cysteine 388, cysteine 435-cysteine 462, cysteine 489-cysteine 510, cysteine 615-cysteine 631, cysteine 713-cysteine 776, cysteine 741-cysteine 754, and cysteine 766-cysteine 795. Serine 238 acts as the Charge relay system in catalysis. CUB domains lie at 312–425 and 435–547; these read CSTN…YEAV and CGSV…ISFV. One can recognise a Peptidase S1 2 domain in the interval 590–819; that stretch reads LIKAEEAMPN…FIPWIMETIL (230 aa). Residues 590 to 974 constitute a propeptide, activation peptide; it reads LIKAEEAMPN…WLSYSFHNQN (385 aa). The N-linked (GlcNAc...) asparagine glycan is linked to asparagine 763. Positions 830 to 858 are disordered; the sequence is EPHHPLFPPDKPSQQKALLPDSPPSSSSQ. Asparagine 926 carries an N-linked (GlcNAc...) asparagine glycan.

The protein belongs to the peptidase S1 family. Post-translationally, the catalytically inactive 107 kDa form is processed both N- and C-terminally to give rise to the 66 kDa catalytically active form and inactive forms of 82 kDa and 59 kDa. In terms of tissue distribution, expressed specifically in the cells lining the bottom of epithelial folds in the oviductal pars recta.

The protein localises to the secreted. The catalysed reaction is Preferential cleavage at 371-Gly-Ser-Arg-|-Trp-374 of glycoprotein gp43 in Xenopus laevis coelemic egg envelope to yield gp41.. In terms of biological role, mediates gamete interaction by affecting the vitelline coat. This Bufo japonicus (Japanese common toad) protein is Ovochymase-2 (OVCH2).